A 283-amino-acid chain; its full sequence is Apidaecins type 73 (283 aa).

The signal sequence occupies residues 1–18; it reads KNFALAILVVTFVVAVFG. Propeptides lie at residues 19-41, 62-69, 90-97, 118-125, 146-153, 174-181, 202-209, 230-237, and 258-265; these read NTNL…EAEP, EAEPEAEP, EAELEAEP, and EAKPEAKP. The disordered stretch occupies residues 19-283; it reads NTNLDPPTRP…PQPRPPHPRI (265 aa). Positions 273 to 283 are enriched in pro residues; it reads IPQPRPPHPRI.

The protein belongs to the apidaecin family.

Its subcellular location is the secreted. Functionally, apidaecins have bactericidal activity; predominantly against Gram-negative bacteria. They seem to interfere with cell propagation. The protein is Apidaecins type 73 (APID73) of Apis mellifera (Honeybee).